Consider the following 330-residue polypeptide: Ketol-acid reductoisomerase (NADP(+)) (330 aa).

Residues 1–181 form the KARI N-terminal Rossmann domain; that stretch reads MNVYYEQDAD…GGTKAGVIET (181 aa). NADP(+) is bound by residues 24–27, R47, S50, S52, and 82–85; these read YGSQ and DQNQ. H107 is an active-site residue. G133 serves as a coordination point for NADP(+). Residues 182 to 327 enclose the KARI C-terminal knotted domain; the sequence is SIKNETETDL…AKLRDMMSWL (146 aa). Mg(2+)-binding residues include D190, E194, E226, and E230. S251 is a binding site for substrate.

It belongs to the ketol-acid reductoisomerase family. The cofactor is Mg(2+).

The catalysed reaction is (2R)-2,3-dihydroxy-3-methylbutanoate + NADP(+) = (2S)-2-acetolactate + NADPH + H(+). The enzyme catalyses (2R,3R)-2,3-dihydroxy-3-methylpentanoate + NADP(+) = (S)-2-ethyl-2-hydroxy-3-oxobutanoate + NADPH + H(+). It functions in the pathway amino-acid biosynthesis; L-isoleucine biosynthesis; L-isoleucine from 2-oxobutanoate: step 2/4. Its pathway is amino-acid biosynthesis; L-valine biosynthesis; L-valine from pyruvate: step 2/4. Its function is as follows. Involved in the biosynthesis of branched-chain amino acids (BCAA). Catalyzes an alkyl-migration followed by a ketol-acid reduction of (S)-2-acetolactate (S2AL) to yield (R)-2,3-dihydroxy-isovalerate. In the isomerase reaction, S2AL is rearranged via a Mg-dependent methyl migration to produce 3-hydroxy-3-methyl-2-ketobutyrate (HMKB). In the reductase reaction, this 2-ketoacid undergoes a metal-dependent reduction by NADPH to yield (R)-2,3-dihydroxy-isovalerate. The polypeptide is Ketol-acid reductoisomerase (NADP(+)) (Pelodictyon phaeoclathratiforme (strain DSM 5477 / BU-1)).